The following is a 491-amino-acid chain: UDP-GalNAc:beta-1,3-N-acetylgalactosaminyltransferase 2 (491 aa).

The Cytoplasmic segment spans residues 1-2 (MR). A helical; Signal-anchor for type II membrane protein transmembrane segment spans residues 3–23 (SAAAALSVCVLAVLLHWICWT). At 24-491 (DRSAELLGFR…NKCGDPCGCS (468 aa)) the chain is on the lumenal side. N-linked (GlcNAc...) asparagine glycosylation is found at N167 and N230.

This sequence belongs to the glycosyltransferase 31 family.

It is found in the golgi apparatus membrane. Its subcellular location is the endoplasmic reticulum. It carries out the reaction 3-O-(N-acetyl-beta-D-glucosaminyl-(1-&gt;4)-alpha-D-mannosyl)-L-threonyl-[protein] + UDP-N-acetyl-alpha-D-galactosamine = 3-O-[beta-D-GalNAc-(1-&gt;3)-beta-D-GlcNAc-(1-&gt;4)-alpha-D-Man]-L-Thr-[protein] + UDP + H(+). It functions in the pathway protein modification; protein glycosylation. Beta-1,3-N-acetylgalactosaminyltransferase that synthesizes a unique carbohydrate structure, GalNAc-beta-1-3GlcNAc, on N- and O-glycans. Has no galactose nor galactosaminyl transferase activity toward any acceptor substrate. Involved in alpha-dystroglycan (dag1) glycosylation. The protein is UDP-GalNAc:beta-1,3-N-acetylgalactosaminyltransferase 2 (b3galnt2) of Danio rerio (Zebrafish).